A 134-amino-acid polypeptide reads, in one-letter code: Large ribosomal subunit protein uL16c (134 aa).

The disordered stretch occupies residues Met-1 to His-22.

This sequence belongs to the universal ribosomal protein uL16 family. As to quaternary structure, part of the 50S ribosomal subunit.

It localises to the plastid. It is found in the chloroplast. This chain is Large ribosomal subunit protein uL16c, found in Nicotiana tabacum (Common tobacco).